The sequence spans 130 residues: Small ribosomal subunit protein uS9 (130 aa).

This sequence belongs to the universal ribosomal protein uS9 family.

This chain is Small ribosomal subunit protein uS9, found in Shewanella baltica (strain OS155 / ATCC BAA-1091).